A 199-amino-acid chain; its full sequence is Crossover junction endodeoxyribonuclease RuvC (199 aa).

Residues aspartate 17, glutamate 76, and aspartate 148 contribute to the active site. Residues aspartate 17, glutamate 76, and aspartate 148 each coordinate Mg(2+).

It belongs to the RuvC family. Homodimer which binds Holliday junction (HJ) DNA. The HJ becomes 2-fold symmetrical on binding to RuvC with unstacked arms; it has a different conformation from HJ DNA in complex with RuvA. In the full resolvosome a probable DNA-RuvA(4)-RuvB(12)-RuvC(2) complex forms which resolves the HJ. Mg(2+) serves as cofactor.

It is found in the cytoplasm. It catalyses the reaction Endonucleolytic cleavage at a junction such as a reciprocal single-stranded crossover between two homologous DNA duplexes (Holliday junction).. In terms of biological role, the RuvA-RuvB-RuvC complex processes Holliday junction (HJ) DNA during genetic recombination and DNA repair. Endonuclease that resolves HJ intermediates. Cleaves cruciform DNA by making single-stranded nicks across the HJ at symmetrical positions within the homologous arms, yielding a 5'-phosphate and a 3'-hydroxyl group; requires a central core of homology in the junction. The consensus cleavage sequence is 5'-(A/T)TT(C/G)-3'. Cleavage occurs on the 3'-side of the TT dinucleotide at the point of strand exchange. HJ branch migration catalyzed by RuvA-RuvB allows RuvC to scan DNA until it finds its consensus sequence, where it cleaves and resolves the cruciform DNA. This Mannheimia succiniciproducens (strain KCTC 0769BP / MBEL55E) protein is Crossover junction endodeoxyribonuclease RuvC.